A 793-amino-acid polypeptide reads, in one-letter code: Ribosome biogenesis protein BOP1 homolog (793 aa).

The segment covering 1–11 (MTKKLTLKRKG) has biased composition (basic residues). The disordered stretch occupies residues 1-168 (MTKKLTLKRK…DSDTSDEEDI (168 aa)). Composition is skewed to acidic residues over residues 44–53 (EDTTDDEGID), 60–72 (SSED…DEEG), and 83–116 (SSEE…DGDE). Residues 117–129 (EKPTTSKQNKSED) are compositionally biased toward basic and acidic residues. Over residues 133-143 (SSKVSKKTQPP) the composition is skewed to polar residues. Over residues 146-161 (DLVKRDPSHPEYHDSD) the composition is skewed to basic and acidic residues. 7 WD repeats span residues 454 to 495 (GHTD…RTIE), 497 to 535 (EDVV…KVLV), 579 to 621 (NHFK…SQIP), 624 to 662 (KSKG…LVKK), 665 to 704 (TNSK…KPYQ), 708 to 747 (LHRN…DLLQ), and 763 to 793 (REDF…RLYT).

Belongs to the WD repeat BOP1/ERB1 family.

The protein localises to the nucleus. It is found in the nucleolus. The protein resides in the nucleoplasm. Its function is as follows. Required for maturation of ribosomal RNAs and formation of the large ribosomal subunit. The sequence is that of Ribosome biogenesis protein BOP1 homolog from Drosophila ananassae (Fruit fly).